The primary structure comprises 335 residues: Serpentine receptor class gamma-11 (335 aa).

7 consecutive transmembrane segments (helical) span residues 33–53, 66–86, 98–118, 154–174, 202–222, 242–262, and 271–291; these read FLQI…LYTI, FFLI…LDII, PIIA…MIVL, LKYL…NLII, FQLI…SVIF, GTAY…LFAF, and TIFG…PIIM.

Belongs to the nematode receptor-like protein srg family.

It localises to the membrane. The protein is Serpentine receptor class gamma-11 (srg-11) of Caenorhabditis elegans.